The chain runs to 1616 residues: Helicase SWR1 (1616 aa).

A compositionally biased stretch (basic residues) spans 1–10 (MARGGSRRRN). Disordered regions lie at residues 1–53 (MARG…IKKE) and 185–238 (KTLE…SDMD). Polar residues predominate over residues 11–26 (TSVISTQKIEPSNEST). Residues 200 to 209 (PSKTSKGNQK) show a composition bias toward low complexity. An HSA domain is found at 396–468 (IPKTQGVTIH…KEQNLKRISK (73 aa)). Disordered regions lie at residues 521–565 (NKSS…VNMD), 583–614 (IDQS…DANK), and 645–774 (LIEK…VPLP). Acidic residues predominate over residues 529-538 (EVDTENENET). Residues 645-654 (LIEKFSKEDE) are compositionally biased toward basic and acidic residues. Residues 705–737 (TEDEEDSNDDVSADSDGNVSDDENMSTTDEEDE) are compositionally biased toward acidic residues. Positions 738-751 (PKTPKSSEDPKMDE) are enriched in basic and acidic residues. The span at 752–763 (KENESDVLEEEV) shows a compositional bias: acidic residues. One can recognise a Helicase ATP-binding domain in the interval 793-958 (ASLYNNGTNG…WSLLYFLMPS (166 aa)). An ATP-binding site is contributed by 806 to 813 (DEMGLGKT). The DEAH box signature appears at 909-912 (DEAH). The disordered stretch occupies residues 992–1013 (NGTSSDVIDENDKTTQRMDEET). Residues 1001-1013 (ENDKTTQRMDEET) are compositionally biased toward basic and acidic residues. In terms of domain architecture, Helicase C-terminal spans 1333–1486 (KLQKLATLLQ…NVVIQEGEFT (154 aa)). Residues 1545–1576 (DDEDFDEESKAATNTATPSQTPGPDTAGSGIV) form a disordered region. Residues 1555–1567 (AATNTATPSQTPG) are compositionally biased toward polar residues.

Belongs to the SNF2/RAD54 helicase family. SWR1 subfamily. Component of the SWR1 chromatin-remodeling complex.

The protein localises to the nucleus. The catalysed reaction is ATP + H2O = ADP + phosphate + H(+). Functionally, catalytic component of the SWR1 complex which mediates the ATP-dependent exchange of histone H2A for the H2A variant HZT1 leading to transcriptional regulation of selected genes by chromatin remodeling. The polypeptide is Helicase SWR1 (SWR1) (Debaryomyces hansenii (strain ATCC 36239 / CBS 767 / BCRC 21394 / JCM 1990 / NBRC 0083 / IGC 2968) (Yeast)).